The chain runs to 1026 residues: RecBCD enzyme subunit RecB (1026 aa).

Positions 1 to 438 (MSSFDIFSPT…LILDTNYRST (438 aa)) constitute a UvrD-like helicase ATP-binding domain. Positions 1-766 (MSSFDIFSPT…LANYANITQH (766 aa)) are DNA-binding and helicase activity, interacts with RecC. 21 to 28 (ASAGTGKT) lines the ATP pocket. The region spanning 452 to 700 (PSPFLETPQT…KITTVHSSKG (249 aa)) is the UvrD-like helicase C-terminal domain. A nuclease activity, interacts with RecD and RecA region spans residues 815-1026 (SQPIYSFSST…KGNGFLQPSP (212 aa)). Mg(2+) is bound by residues histidine 854, aspartate 940, and aspartate 953. Aspartate 953 (for nuclease activity) is an active-site residue.

This sequence belongs to the helicase family. UvrD subfamily. Heterotrimer of RecB, RecC and RecD. All subunits contribute to DNA-binding. Interacts with RecA. Mg(2+) is required as a cofactor.

The catalysed reaction is Exonucleolytic cleavage (in the presence of ATP) in either 5'- to 3'- or 3'- to 5'-direction to yield 5'-phosphooligonucleotides.. It catalyses the reaction Couples ATP hydrolysis with the unwinding of duplex DNA by translocating in the 3'-5' direction.. It carries out the reaction ATP + H2O = ADP + phosphate + H(+). A helicase/nuclease that prepares dsDNA breaks (DSB) for recombinational DNA repair. Binds to DSBs and unwinds DNA via a highly rapid and processive ATP-dependent bidirectional helicase activity. Unwinds dsDNA until it encounters a Chi (crossover hotspot instigator) sequence from the 3' direction. Cuts ssDNA a few nucleotides 3' to the Chi site. The properties and activities of the enzyme are changed at Chi. The Chi-altered holoenzyme produces a long 3'-ssDNA overhang and facilitates RecA-binding to the ssDNA for homologous DNA recombination and repair. Holoenzyme degrades any linearized DNA that is unable to undergo homologous recombination. In the holoenzyme this subunit contributes ATPase, 3'-5' helicase, exonuclease activity and loads RecA onto ssDNA. The chain is RecBCD enzyme subunit RecB from Chlamydia muridarum (strain MoPn / Nigg).